The sequence spans 254 residues: Metalloprotease YcaL (254 aa).

The signal sequence occupies residues Met1 to Gly19. Residue Cys20 is the site of N-palmitoyl cysteine attachment. The S-diacylglycerol cysteine moiety is linked to residue Cys20. Position 134 (His134) interacts with Zn(2+). Glu135 is an active-site residue. His138 and Glu193 together coordinate Zn(2+). Positions Gly227–Lys254 are disordered. The segment covering Arg242–Lys254 has biased composition (basic and acidic residues).

This sequence belongs to the peptidase M48B family. It depends on Zn(2+) as a cofactor.

The protein localises to the cell inner membrane. Involved in the degradation of the LPS-assembly protein LptD. Degrades LptD that have engaged the Bam complex but are stalled at an early step in the outer membrane protein assembly process. This Escherichia coli (strain K12) protein is Metalloprotease YcaL (ycaL).